Here is a 200-residue protein sequence, read N- to C-terminus: Pyrrolidone-carboxylate peptidase (200 aa).

Active-site residues include Glu78, Cys141, and His165.

It belongs to the peptidase C15 family. As to quaternary structure, homotetramer.

The protein localises to the cytoplasm. The catalysed reaction is Release of an N-terminal pyroglutamyl group from a polypeptide, the second amino acid generally not being Pro.. In terms of biological role, removes 5-oxoproline from various penultimate amino acid residues except L-proline. This Lactobacillus helveticus (strain DPC 4571) protein is Pyrrolidone-carboxylate peptidase.